The primary structure comprises 273 residues: Acetyl-coenzyme A carboxylase carboxyl transferase subunit alpha (273 aa).

The 244-residue stretch at 1–244 folds into the CoA carboxyltransferase C-terminal domain; the sequence is MKKATQSKAW…KVVLKQALDE (244 aa).

The protein belongs to the AccA family. As to quaternary structure, acetyl-CoA carboxylase is a heterohexamer composed of biotin carboxyl carrier protein (AccB), biotin carboxylase (AccC) and two subunits each of ACCase subunit alpha (AccA) and ACCase subunit beta (AccD).

It localises to the cytoplasm. The catalysed reaction is N(6)-carboxybiotinyl-L-lysyl-[protein] + acetyl-CoA = N(6)-biotinyl-L-lysyl-[protein] + malonyl-CoA. It functions in the pathway lipid metabolism; malonyl-CoA biosynthesis; malonyl-CoA from acetyl-CoA: step 1/1. In terms of biological role, component of the acetyl coenzyme A carboxylase (ACC) complex. First, biotin carboxylase catalyzes the carboxylation of biotin on its carrier protein (BCCP) and then the CO(2) group is transferred by the carboxyltransferase to acetyl-CoA to form malonyl-CoA. This chain is Acetyl-coenzyme A carboxylase carboxyl transferase subunit alpha, found in Acinetobacter baumannii (strain ACICU).